Reading from the N-terminus, the 96-residue chain is Acylphosphatase (96 aa).

The Acylphosphatase-like domain maps to 4–91 (RVHVYVKGKV…GEFDDFRILY (88 aa)). Residues R19 and N37 contribute to the active site.

This sequence belongs to the acylphosphatase family.

It carries out the reaction an acyl phosphate + H2O = a carboxylate + phosphate + H(+). The sequence is that of Acylphosphatase (acyP) from Syntrophus aciditrophicus (strain SB).